Consider the following 283-residue polypeptide: 4-diphosphocytidyl-2-C-methyl-D-erythritol kinase (283 aa).

Lys13 is a catalytic residue. 96-106 (PMGGGIGGGSS) contacts ATP. The active site involves Asp138.

It belongs to the GHMP kinase family. IspE subfamily.

It carries out the reaction 4-CDP-2-C-methyl-D-erythritol + ATP = 4-CDP-2-C-methyl-D-erythritol 2-phosphate + ADP + H(+). The protein operates within isoprenoid biosynthesis; isopentenyl diphosphate biosynthesis via DXP pathway; isopentenyl diphosphate from 1-deoxy-D-xylulose 5-phosphate: step 3/6. Functionally, catalyzes the phosphorylation of the position 2 hydroxy group of 4-diphosphocytidyl-2C-methyl-D-erythritol. In Pseudomonas fluorescens (strain SBW25), this protein is 4-diphosphocytidyl-2-C-methyl-D-erythritol kinase.